The primary structure comprises 1021 residues: TLMFSFIQANCGRGRAATIELGVRLRRSESMFALVQEPYLGGDEMDVLPEGMRVFTDRRGKAAILVDHQEAICMPVETLTTDYGVCLVVKGSFGSIFLCAAYCQFDAPLEPYLRYMDAVLLQASRTPAILGLDANAVSPMWLSKLSRHAEGQANYRRGELLSEWMLEARVAALNQSTEVYTFDNHRATSDIDVTIVNEAASMWATYEWRVDEWELSDHNIITVVAEPTTARSVESIAPVPSWNFSNARWRLFKEEMVSRIAELPENFSESPLDQQVSTLRSIVHSVCDTALGRKLTRSPSRRARWWTADLCAARREVRRLRRLLQDGRRRDDDAAVELVVVELRRASAYYKKLIGRAKMDDWKRFVGDHADDPWGRVYKICRGRRKCTEIGCLRVNGELITDWGDCARVLLRNFFPVAESEAPTAIAEEVPPALEVFEVDTCVARLKSRRSPGLDGINGTICKAVWRAIPEHLASLFSRCIRLGYFPAEWKCPRVVSLLKGPDKDKCEPSSYRGICLLPVFGKVLEAIMVNRVREVLPEGCRWQFGFRQGRCVEDAWRHVKSSVGASAAQYVLGTFVDFKGAFDNVEWSAALSRLADLGCREMGLWQSFFSGRRAVIRSSSGTVEVPVTRGCPQGSISGPFIWDILMDVLLQRLQPYCQLSAYADDLLLLVEGNSRAVLEEKGAQLMSIVETWGAEVGDCLSTSKTVIMLLKGALRRAPTVRFAGRNLPYVRSCRYLGITVSEGMKFLTHIASLRQRMTGVVGALARVLRADWGFSPRARRTIYDGLMAPCVLFGAPVWYDTAEQVAAQRRLASCQRLILLGCLSVCRTVSTVALQVLGGAPPLDLAAKLLAIKYKLKRGFPLEENDWLYGEDIACLSWEQRKTRLEECLIQSWQNRWDDDSEPGRVTHRFIPYVTLAYRDPSFGFSMRTSFLLTGHGSFNAFLHGRALSDTTACACGDPYEDWMHILCACPLYADLRDLDGLGVQRLGENWIFEGILDDQEKTQRLAMFAEEVFLRRRAL.

A Reverse transcriptase domain is found at arginine 479 to valine 741. A gag-like cysteine motif region spans residues cysteine 955–cysteine 971.

The polypeptide is Putative 115 kDa protein in type-1 retrotransposable element R1DM (R1A1-element\ORF2) (Drosophila melanogaster (Fruit fly)).